We begin with the raw amino-acid sequence, 1131 residues long: Protein TOPLESS (1131 aa).

The region spanning 4 to 36 (LSRELVFLILQFLDEEKFKETVHKLEQESGFFF) is the LisH domain. The CTLH domain occupies 34-92 (FFFNMKYFEDEVHNGNWDEVEKYLSGFTKVDDNRYSMKIFFEIRKQKYLEALDKHDRPK). The residue at position 214 (Ser214) is a Phosphoserine. The tract at residues 286–305 (TPPTNASLDYPSADSEHVSK) is disordered. 15 WD repeats span residues 353–393 (SQGS…RLVQ), 415–454 (EPVV…DMRQ), 460–501 (AHVG…KRHT), 504–545 (GHEA…SRVD), 548–591 (APGR…VKRT), 595–634 (FHKR…LLTA), 639–678 (GGLQ…RLLH), 710–756 (DRSA…EPSQ), 766–805 (LRVA…RNAT), 833–871 (NPEE…TMAT), 874–914 (PPPP…VKSK), 917–956 (GHSK…KQRS), 967–1005 (NSAP…CMKQ), 1010–1049 (ESLA…LRCR), and 1060–1102 (LSNS…GKWG). Positions 1100–1131 (KWGVAPPAENGSASGAPTAPSVGASASDQPQR) are disordered.

Tetramer. Homodimer. Interacts (via the LisH domain) with WUS (via the C-terminal domain). Interacts with NINJA/AFPH2. Interacts with IAA1; IAA2; IAA3; IAA4; IAA6; IAA8; IAA9; IAA11; IAA13; IAA14; IAA17; IAA18; IAA26; IAA27 and IAA28. Interacts (via the LisH domain) with IAA12/BDL (via domain I). Can form a complex with IAA12 and ARF5. Interacts with AP2 (via EAR motif) and HDA19. Interacts with TIFY5A/JAZ8 (via EAR motif). Interacts with SPEAR3/TIE1. Interacts with SPL (via EAR motif). Interacts with ZAT2 and ZAT3 (via the EAR motif). Interacts with JAZ13 (via EAR motif). Interacts with GIR1 and GIR2. As to expression, expressed in embryo and in extraembryonic tissues. Expressed in inflorescences, flowers, floral meristems, developing anthers and ovules. Detected in the vascular tissues, shoot apical meristem, cotyledons and young leaves. Expressed ubiquitously in the pistils, stamens and pollens.

The protein localises to the nucleus. In terms of biological role, transcriptional corepressor. May repress the expression of root-promoting genes in the top half of the embryo to allow proper differentiation of the shoot pole during the transition stage of embryogenesis. Regulates the expression of PLT1 and PLT2. Negative regulator of jasmonate responses. Negative regulator of auxin responses. Negative regulator of multiple floral organ identity genes. Required for ovule development. The polypeptide is Protein TOPLESS (TPL) (Arabidopsis thaliana (Mouse-ear cress)).